The primary structure comprises 383 residues: MIVSSTTDFREAARRRLPRFLFDYIDGGAYAERTMARNIDDLADIALRQRVLMDVSVVDPSTTLFGVRQALPVALAPVGLTGMYARRGECQAARAAAAKGVPFCLSTVSVCDVDEVRAASATPFWFQLYVLRDRGFMRDLLARASAAGATTLVFTVDMPVPGARYRDAHSGMSGPNAAARRLVQAALKPAWAWDVGVMGHPHRLGNVAPALGKASGLQDFMGWLAANFDPSIQWSDLKWIRDAWKGPLVIKGVLDPEDAKAAADIGADGVVVSNHGGRQLDGVLSSARALPAIADAVGDRLTVLADGGVRSGLDVVRMLALGARGVLIGRAYAYALAARGEAGVTQLLDLIDKEMRVAMALTGVRDVASINETILAERVPRAG.

The 380-residue stretch at 1–380 (MIVSSTTDFR…NETILAERVP (380 aa)) folds into the FMN hydroxy acid dehydrogenase domain. Tyr24 provides a ligand contact to substrate. Positions 106 and 127 each coordinate FMN. Tyr129 serves as a coordination point for substrate. Thr155 provides a ligand contact to FMN. Residue Arg164 coordinates substrate. Lys251 provides a ligand contact to FMN. His275 functions as the Proton acceptor in the catalytic mechanism. Arg278 serves as a coordination point for substrate. Position 306 to 330 (306 to 330 (DGGVRSGLDVVRMLALGARGVLIGR)) interacts with FMN.

The protein belongs to the FMN-dependent alpha-hydroxy acid dehydrogenase family. The cofactor is FMN.

The protein resides in the cell inner membrane. The catalysed reaction is (S)-lactate + A = pyruvate + AH2. In terms of biological role, catalyzes the conversion of L-lactate to pyruvate. Is coupled to the respiratory chain. The protein is L-lactate dehydrogenase of Caulobacter vibrioides (strain ATCC 19089 / CIP 103742 / CB 15) (Caulobacter crescentus).